Reading from the N-terminus, the 177-residue chain is Putative pre-16S rRNA nuclease (177 aa).

Belongs to the YqgF nuclease family.

The protein resides in the cytoplasm. Functionally, could be a nuclease involved in processing of the 5'-end of pre-16S rRNA. The protein is Putative pre-16S rRNA nuclease of Psychrobacter sp. (strain PRwf-1).